Reading from the N-terminus, the 575-residue chain is Regulatory protein zeste (575 aa).

Residues 1–26 (MSAQGEGGGAGGSGGGGAGSDGGGNA) are compositionally biased toward gly residues. Disordered regions lie at residues 1–53 (MSAQ…LPLT) and 151–174 (SVAS…VKVE). A hydrophobic region spans residues 2-47 (SAQGEGGGAGGSGGGGAGSDGGGNAGQSSTGSGTVAVTNGGNSSAK). Over residues 31-51 (TGSGTVAVTNGGNSSAKNQLP) the composition is skewed to polar residues. The DNA-binding element occupies 48–128 (NQLPLTPRFT…WLNSRLRKQY (81 aa)). Low complexity predominate over residues 151-164 (SVASAVPQQQQQQH).

As to quaternary structure, self-associates forming complexes of several hundred monomers.

It localises to the nucleus. Functionally, involved in transvection phenomena (= synapsis-dependent gene expression), where the synaptic pairing of chromosomes carrying genes with which zeste interacts influences the expression of these genes. Zeste binds to DNA and stimulates transcription from a nearby promoter. The polypeptide is Regulatory protein zeste (z) (Drosophila melanogaster (Fruit fly)).